A 354-amino-acid polypeptide reads, in one-letter code: UDP-N-acetylglucosamine--N-acetylmuramyl-(pentapeptide) pyrophosphoryl-undecaprenol N-acetylglucosamine transferase (354 aa).

Residues 11-13 (TAG), R164, S194, and Q289 contribute to the UDP-N-acetyl-alpha-D-glucosamine site.

It belongs to the glycosyltransferase 28 family. MurG subfamily.

The protein localises to the cell membrane. The enzyme catalyses di-trans,octa-cis-undecaprenyl diphospho-N-acetyl-alpha-D-muramoyl-L-alanyl-D-glutamyl-meso-2,6-diaminopimeloyl-D-alanyl-D-alanine + UDP-N-acetyl-alpha-D-glucosamine = di-trans,octa-cis-undecaprenyl diphospho-[N-acetyl-alpha-D-glucosaminyl-(1-&gt;4)]-N-acetyl-alpha-D-muramoyl-L-alanyl-D-glutamyl-meso-2,6-diaminopimeloyl-D-alanyl-D-alanine + UDP + H(+). It participates in cell wall biogenesis; peptidoglycan biosynthesis. Cell wall formation. Catalyzes the transfer of a GlcNAc subunit on undecaprenyl-pyrophosphoryl-MurNAc-pentapeptide (lipid intermediate I) to form undecaprenyl-pyrophosphoryl-MurNAc-(pentapeptide)GlcNAc (lipid intermediate II). In Clostridium botulinum (strain Kyoto / Type A2), this protein is UDP-N-acetylglucosamine--N-acetylmuramyl-(pentapeptide) pyrophosphoryl-undecaprenol N-acetylglucosamine transferase.